An 89-amino-acid chain; its full sequence is Small ribosomal subunit protein uS15 (89 aa).

This sequence belongs to the universal ribosomal protein uS15 family. Part of the 30S ribosomal subunit. Forms a bridge to the 50S subunit in the 70S ribosome, contacting the 23S rRNA.

Its function is as follows. One of the primary rRNA binding proteins, it binds directly to 16S rRNA where it helps nucleate assembly of the platform of the 30S subunit by binding and bridging several RNA helices of the 16S rRNA. In terms of biological role, forms an intersubunit bridge (bridge B4) with the 23S rRNA of the 50S subunit in the ribosome. This Methylobacterium sp. (strain 4-46) protein is Small ribosomal subunit protein uS15.